The chain runs to 242 residues: Triosephosphate isomerase (242 aa).

Substrate is bound at residue 9–11 (NWK). His-96 acts as the Electrophile in catalysis. Glu-165 functions as the Proton acceptor in the catalytic mechanism. Residues Gly-171, Ser-204, and 225–226 (GG) contribute to the substrate site.

It belongs to the triosephosphate isomerase family. Homodimer.

The protein resides in the cytoplasm. The enzyme catalyses D-glyceraldehyde 3-phosphate = dihydroxyacetone phosphate. Its pathway is carbohydrate biosynthesis; gluconeogenesis. It participates in carbohydrate degradation; glycolysis; D-glyceraldehyde 3-phosphate from glycerone phosphate: step 1/1. Involved in the gluconeogenesis. Catalyzes stereospecifically the conversion of dihydroxyacetone phosphate (DHAP) to D-glyceraldehyde-3-phosphate (G3P). In Synechocystis sp. (strain ATCC 27184 / PCC 6803 / Kazusa), this protein is Triosephosphate isomerase.